The primary structure comprises 397 residues: Teichoic acid D-alanine hydrolase (397 aa).

An N-terminal signal peptide occupies residues 1 to 23 (MKFNKVKLVIHACVLLFIIISIA).

The protein resides in the cell membrane. The enzyme catalyses [(4-D-Ala)-(2-GlcNAc)-Rib-ol-P]n-[Gro-P]m-beta-D-ManNAc-(1-&gt;4)-alpha-D-GlcNAc-P-peptidoglycan + n H2O = [(2-GlcNAc)-Rib-ol-P]n-[Gro-P]m-beta-D-ManNAc-(1-&gt;4)-alpha-D-GlcNAc-P-peptidoglycan + n D-alanine.. In terms of biological role, catalyzes the liberation of D-alanyl moieties present on wall teichoic acid (WTA) and lipoteichoic acid (LTA). Affects the methicillin resistance level and autolysis in the presence of Triton X-100 as well as the cell wall structure. This is Teichoic acid D-alanine hydrolase (fmtA) from Staphylococcus aureus (strain NCTC 8325 / PS 47).